We begin with the raw amino-acid sequence, 89 residues long: Small ribosomal subunit protein uS19 (89 aa).

It belongs to the universal ribosomal protein uS19 family.

In terms of biological role, protein S19 forms a complex with S13 that binds strongly to the 16S ribosomal RNA. The sequence is that of Small ribosomal subunit protein uS19 from Bacteroides thetaiotaomicron (strain ATCC 29148 / DSM 2079 / JCM 5827 / CCUG 10774 / NCTC 10582 / VPI-5482 / E50).